The primary structure comprises 138 residues: ER-derived vesicles protein ERV14 (138 aa).

Over 2-6 the chain is Cytoplasmic; that stretch reads GAWLF. The chain crosses the membrane as a helical span at residues 7–27; that stretch reads ILAVVVNCINLFGQVHFTILY. Residues 28-52 lie on the Extracellular side of the membrane; the sequence is ADLEADYINPIELCSKVNKLITPEA. The chain crosses the membrane as a helical span at residues 53-73; it reads ALHGALSLLFLLNGYWFVFLL. Residues 74-111 lie on the Cytoplasmic side of the membrane; sequence NLPVLAYNLNKIYNKVQLLDATEIFRTLGKHKRESFLK. The helical transmembrane segment at 112–132 threads the bilayer; that stretch reads LGFHLLMFFFYLYRMIMALIA. At 133 to 138 the chain is on the extracellular side; that stretch reads ESGDDF.

Belongs to the cornichon family.

The protein localises to the endoplasmic reticulum membrane. The protein resides in the golgi apparatus membrane. Functionally, could regulate export of the bud site and axial growth sites selection protein AXL2 and possibly other secretory proteins from the endoplasmic reticulum in COPII-coated vesicles. Seems to be required for axial budding pattern in haploid cells. The chain is ER-derived vesicles protein ERV14 (ERV14) from Saccharomyces cerevisiae (strain ATCC 204508 / S288c) (Baker's yeast).